The primary structure comprises 54 residues: Large ribosomal subunit protein bL33B (54 aa).

This sequence belongs to the bacterial ribosomal protein bL33 family.

The protein is Large ribosomal subunit protein bL33B of Mycobacterium sp. (strain KMS).